Reading from the N-terminus, the 452-residue chain is MGRRYFGTDGIRGKVGDAPITPDFVLRLGYAAGKVLASAPGRAASGARPTVLIGKDTRVSGYMLEAALEAGFSAAGVDVMLAGPMPTPGVAYLTRALRLSAGVVISASHNPYHDNGIKFFSADGNKLPDEIEAEIEAWLDKPLDCAASDGLGKARRLDDAAGRYIEFCKSTFPAAFDLRGMKLVVDCAHGAAYQVAPHVFHELGADVIPIGVAPNGFNINDGVGATAPDALMRAVRANHADLGIALDGDADRLLVVDHTGRLYNGDELLYVLVKDRIATNGQVEGAVGTLMTNFAVEVALKEAGVQFVRAAVGDRYVLEQLREHGWQLGAEGSGHILSLDRHSTGDGIVSALLVLAALKRSGKTLAQMLEGVTLFPQKLINVRMKPGADWKGSDAIRRAIDSAEQALSGSGRVLIRASGTEPVLRVMVEARQATDANRHAEAIADAVKQATA.

The active-site Phosphoserine intermediate is serine 108. Residues serine 108, aspartate 247, aspartate 249, and aspartate 251 each contribute to the Mg(2+) site. Serine 108 is modified (phosphoserine).

Belongs to the phosphohexose mutase family. Mg(2+) is required as a cofactor. Post-translationally, activated by phosphorylation.

It catalyses the reaction alpha-D-glucosamine 1-phosphate = D-glucosamine 6-phosphate. In terms of biological role, catalyzes the conversion of glucosamine-6-phosphate to glucosamine-1-phosphate. This Burkholderia pseudomallei (strain K96243) protein is Phosphoglucosamine mutase.